The chain runs to 248 residues: Small ribosomal subunit protein uS3 (248 aa).

Positions 39–111 (IRKYLNKVYK…EIVFNVVEVK (73 aa)) constitute a KH type-2 domain. Residues 222-248 (KPFEASAPRPQRRNRKEANNYVNAKKN) form a disordered region.

It belongs to the universal ribosomal protein uS3 family. Part of the 30S ribosomal subunit. Forms a tight complex with proteins S10 and S14.

In terms of biological role, binds the lower part of the 30S subunit head. Binds mRNA in the 70S ribosome, positioning it for translation. This is Small ribosomal subunit protein uS3 from Alteracholeplasma palmae (strain ATCC 49389 / J233) (Acholeplasma palmae).